We begin with the raw amino-acid sequence, 101 residues long: MKPGEYDIQPGEIILNEGRARLTITVENSGDRPIQVGSHYHFYETNPALVFDREKTRGYRLNIAAGTAVRFEPGQDREVELVEVSGNKIIYGFRGEIMGEL.

This sequence belongs to the urease beta subunit family. As to quaternary structure, heterotrimer of UreA (gamma), UreB (beta) and UreC (alpha) subunits. Three heterotrimers associate to form the active enzyme.

It is found in the cytoplasm. It carries out the reaction urea + 2 H2O + H(+) = hydrogencarbonate + 2 NH4(+). It functions in the pathway nitrogen metabolism; urea degradation; CO(2) and NH(3) from urea (urease route): step 1/1. This is Urease subunit beta from Saccharophagus degradans (strain 2-40 / ATCC 43961 / DSM 17024).